Reading from the N-terminus, the 131-residue chain is Antitoxin MqsA (131 aa).

Residues cysteine 3, cysteine 6, cysteine 37, and cysteine 40 each contribute to the Zn(2+) site. Residues 74–127 (IVKVRKKLSLTQKEASEIFGGGVNAFSRYEKGNAQPHPSTIKLLRVLDKHPELL) enclose the HTH cro/C1-type domain. The segment at residues 85 to 104 (QKEASEIFGGGVNAFSRYEK) is a DNA-binding region (H-T-H motif).

In terms of assembly, homodimer. Crystallizes as a heterotetramer with MqsA, MqsR-MqsA(2)-MqsR. Purifies as a probable heterohexamer of 2 MqsR dimers and 1 MqsA dimer. Binds promoter DNA as a dimer. When the 2 dissociate the MsqR mRNA interferase becomes active. Zn(2+) is required as a cofactor. Degraded in the presence of oxidative stress, maybe by the Lon and/or ClpX proteases.

Functionally, antitoxin component of a type II toxin-antitoxin (TA) system. Labile antitoxin that binds to the MqsR mRNA interferase toxin and neutralizes its endoribonuclease activity. Overexpression prevents MqsR-mediated cessation of cell growth and inhibition of cell proliferation. Initially reported to act as a cotranscription factor with MqsA. Following further experiments, the MqsR-MqsA complex does not bind DNA and all reported data are actually due to a small fraction of free MqsA alone binding DNA. Addition of MqsR to a preformed MqsA-promoter DNA complex causes dissociation of the MqsA-DNA complex, probably causing derepression of MqsA-repressed transcripts. MqsA binds to 2 palindromes in the promoter region of the mqsRA operon activating its transcription. Binds to other promoters, inducing mcbR and spy and repressing cspD among others. Binds to and represses the rpoS promoter, the master stress regulator, resulting in decreased cyclic-di-GMP, reduced stress resistance, increased cell motility and decreased biofilm formation; in these experiments 5 TA systems are missing (lacks MazEF, RelEB, ChpB, YoeB-YefM, YafQ-DinJ). An earlier study showed overexpression alone increases biofilm formation, perhaps by repressing cspD; in these experiments the 5 TA systems are present. Represses the csgD promoter. In the presence of stress, when this protein is degraded, the promoters it represses are derepressed, leading to biofilm formation. This TA system mediates cell growth during bile acid deoxycholate stress by degrading mRNA for probable deoxycholate-binding protein YgiS; bile acid detergents such as deoxycholate are important for host defense against bacterial growth in the gall bladder and duodenum. The polypeptide is Antitoxin MqsA (Escherichia coli (strain K12)).